We begin with the raw amino-acid sequence, 37 residues long: Large ribosomal subunit protein bL36c (37 aa).

Belongs to the bacterial ribosomal protein bL36 family.

The protein localises to the plastid. It localises to the chloroplast. This chain is Large ribosomal subunit protein bL36c, found in Bigelowiella natans (Pedinomonas minutissima).